Here is a 445-residue protein sequence, read N- to C-terminus: METRTEDGGLTRRPTLASSWDVAGGALTHSLLLTRAGLGPGDFDWEELLAPPAPGQDLVILKRNHNNKDENPCFLYLRCGPDGGEEIASIGILSSARNMEVYLGEEYCGTSRGKNVCTVLDDSEHEKIILYKKNLKLESSTHACKIKLLSFGERQCVFISKVVVHMRSVFANSSTSSPALGSRIDLDKVQTIMESMGSKLSPGAQQLMDMVRCQQRNCIPIGEQLQSVLGNSGYKHMIGLQSSSTLGTLNKSSSTPFPFRTGLTSGNVTENLQTYIDKSTQLPGGENSTKLDECKVMPQNHSFLENDLKNAMASFLPKKVSDNSNIPNSELLPFLQNLCSQVNHLHVGNKTECQENITKHGERILGVGMEEQSICSYLEKILSKNMELMEKKLMDYIDQRIHELQEHIDDKIALLLDLLQNPNSPPTGIPLRHYDSGERLSNGER.

Phosphoserine occurs at positions 177, 182, 254, and 302. Residues 426 to 445 are disordered; that stretch reads PTGIPLRHYDSGERLSNGER. Positions 432-445 are enriched in basic and acidic residues; it reads RHYDSGERLSNGER.

Homodimer. Interacts with ABCB7, ABCB8/MITOSUR and ABCB10.

The protein localises to the cytoplasm. The protein resides in the mitochondrion. It carries out the reaction ATP + H2O = ADP + phosphate + H(+). Its function is as follows. ATPase that regulates mitochondrial ABC transporters ABCB7, ABCB8/MITOSUR and ABCB10. Regulates mitochondrial ferric concentration and heme biosynthesis and plays a role in the maintenance of mitochondrial homeostasis and cell survival. The chain is ATPase PAAT from Homo sapiens (Human).